Here is a 321-residue protein sequence, read N- to C-terminus: Glutamyl-Q tRNA(Asp) synthetase (321 aa).

Residues 25-29 (RFAPS) and Glu-61 contribute to the L-glutamate site. The short motif at 28–38 (PSPSGDLHFGS) is the 'HIGH' region element. Zn(2+) contacts are provided by Cys-117, Cys-119, Tyr-131, and Cys-135. Residues Tyr-188 and Arg-206 each contribute to the L-glutamate site. Positions 244–248 (KLSKQ) match the 'KMSKS' region motif. Lys-247 is an ATP binding site.

It belongs to the class-I aminoacyl-tRNA synthetase family. GluQ subfamily. Zn(2+) is required as a cofactor.

In terms of biological role, catalyzes the tRNA-independent activation of glutamate in presence of ATP and the subsequent transfer of glutamate onto a tRNA(Asp). Glutamate is transferred on the 2-amino-5-(4,5-dihydroxy-2-cyclopenten-1-yl) moiety of the queuosine in the wobble position of the QUC anticodon. The protein is Glutamyl-Q tRNA(Asp) synthetase of Yersinia pestis.